A 564-amino-acid chain; its full sequence is Rho guanine nucleotide exchange factor 9 (564 aa).

In terms of domain architecture, SH3 spans 8 to 67 (DSIVSAEAVWDHATMANRELAFKAGDVIKVLDASNKDWWWGQIDDEEGWFPASFVRLWVN). The tract at residues 100 to 110 (RDQMRANVINE) is interaction with GPHN. The DH domain occupies 103–287 (MRANVINEIM…RNVTQQINER (185 aa)). The 108-residue stretch at 318 to 425 (ELIYTGEMAW…WLRAFREERK (108 aa)) folds into the PH domain. Residues 451 to 470 (KVPKQKGVNSARSVPPSYPP) are disordered. Serine 502 is subject to Phosphoserine.

In terms of assembly, interacts with GPHN.

The protein localises to the cytoplasm. It localises to the postsynaptic density. In terms of biological role, acts as a guanine nucleotide exchange factor (GEF) for CDC42. Promotes formation of GPHN clusters. This chain is Rho guanine nucleotide exchange factor 9 (ARHGEF9), found in Pongo abelii (Sumatran orangutan).